Here is a 189-residue protein sequence, read N- to C-terminus: Chitin synthase 1 (189 aa).

This sequence belongs to the chitin synthase family.

The protein resides in the cell membrane. It catalyses the reaction [(1-&gt;4)-N-acetyl-beta-D-glucosaminyl](n) + UDP-N-acetyl-alpha-D-glucosamine = [(1-&gt;4)-N-acetyl-beta-D-glucosaminyl](n+1) + UDP + H(+). In terms of biological role, polymerizes chitin, a structural polymer of the cell wall and septum, by transferring the sugar moiety of UDP-GlcNAc to the non-reducing end of the growing chitin polymer. The chain is Chitin synthase 1 (CHS1) from Xylohypha bantiana.